Consider the following 463-residue polypeptide: Altered inheritance of mitochondria protein 23, mitochondrial (463 aa).

The transit peptide at 1–69 (MKLHTRTLLA…TRFGNNNERY (69 aa)) directs the protein to the mitochondrion. Disordered regions lie at residues 25–124 (LNRP…NQKL), 208–229 (IHSSSRKADSKTEDGADKGAST), and 391–449 (KKPT…KKLT). Over residues 48–79 (QPRTGSNLSPRQTRFGNNNERYGSASGKQLGQ) the composition is skewed to polar residues. Over residues 94–114 (NHNNNSNNNNNGGYPSSNVNS) the composition is skewed to low complexity. Residues 213–224 (RKADSKTEDGAD) show a composition bias toward basic and acidic residues. Polar residues predominate over residues 391–405 (KKPTTGGTNSTSTIK). Basic and acidic residues-rich tracts occupy residues 406–423 (QTDKNRDGTIRDKKKEKL) and 440–449 (PPAKEKKKLT).

This sequence belongs to the AIM23 family.

Its subcellular location is the mitochondrion. This is Altered inheritance of mitochondria protein 23, mitochondrial (AIM23) from Lodderomyces elongisporus (strain ATCC 11503 / CBS 2605 / JCM 1781 / NBRC 1676 / NRRL YB-4239) (Yeast).